Here is a 275-residue protein sequence, read N- to C-terminus: Polyamine aminopropyltransferase (275 aa).

A PABS domain is found at 2–235 (ELWFTEKQTK…GLWTFTIGSK (234 aa)). Q31 is a binding site for S-methyl-5'-thioadenosine. H62 and D86 together coordinate spermidine. S-methyl-5'-thioadenosine-binding positions include E106 and 137–138 (DG). The Proton acceptor role is filled by D155. Residue 155–158 (DSTE) participates in spermidine binding. Position 162 (P162) interacts with S-methyl-5'-thioadenosine.

Belongs to the spermidine/spermine synthase family. Homodimer or homotetramer.

The protein resides in the cytoplasm. The enzyme catalyses S-adenosyl 3-(methylsulfanyl)propylamine + putrescine = S-methyl-5'-thioadenosine + spermidine + H(+). It participates in amine and polyamine biosynthesis; spermidine biosynthesis; spermidine from putrescine: step 1/1. Functionally, catalyzes the irreversible transfer of a propylamine group from the amino donor S-adenosylmethioninamine (decarboxy-AdoMet) to putrescine (1,4-diaminobutane) to yield spermidine. The sequence is that of Polyamine aminopropyltransferase from Bacillus mycoides (strain KBAB4) (Bacillus weihenstephanensis).